A 441-amino-acid chain; its full sequence is Signal recognition particle 54 kDa protein (441 aa).

GTP contacts are provided by residues 104-111 (GLQGSGKT), 186-190 (DTAGR), and 244-247 (TKLD).

The protein belongs to the GTP-binding SRP family. SRP54 subfamily. In terms of assembly, part of the signal recognition particle protein translocation system, which is composed of SRP and FtsY. Archaeal SRP consists of a 7S RNA molecule of 300 nucleotides and two protein subunits: SRP54 and SRP19.

Its subcellular location is the cytoplasm. It catalyses the reaction GTP + H2O = GDP + phosphate + H(+). Its function is as follows. Involved in targeting and insertion of nascent membrane proteins into the cytoplasmic membrane. Binds to the hydrophobic signal sequence of the ribosome-nascent chain (RNC) as it emerges from the ribosomes. The SRP-RNC complex is then targeted to the cytoplasmic membrane where it interacts with the SRP receptor FtsY. This chain is Signal recognition particle 54 kDa protein, found in Staphylothermus marinus (strain ATCC 43588 / DSM 3639 / JCM 9404 / F1).